We begin with the raw amino-acid sequence, 626 residues long: Carnitine O-acetyltransferase (626 aa).

The residue at position 93 (lysine 93) is an N6-succinyllysine. Residue lysine 261 is modified to N6-acetyllysine; alternate. At lysine 261 the chain carries N6-succinyllysine; alternate. Position 268 is an N6-acetyllysine (lysine 268). Residue histidine 343 is the Proton acceptor of the active site. CoA is bound by residues lysine 419 and 423–430; that span reads KSQKLSPD. Positions 452 and 454 each coordinate (R)-carnitine. Serine 456 contributes to the CoA binding site. Threonine 465 lines the (R)-carnitine pocket. 2 residues coordinate CoA: arginine 504 and glutamine 555. The Microbody targeting signal signature appears at 624–626; it reads AKL.

Belongs to the carnitine/choline acetyltransferase family. Monomer. In terms of tissue distribution, expressed in flagella of epididymal sperm.

The protein localises to the endoplasmic reticulum. Its subcellular location is the peroxisome. The protein resides in the mitochondrion inner membrane. It carries out the reaction (R)-carnitine + acetyl-CoA = O-acetyl-(R)-carnitine + CoA. The catalysed reaction is propanoyl-CoA + (R)-carnitine = O-propanoyl-(R)-carnitine + CoA. It catalyses the reaction butanoyl-CoA + (R)-carnitine = O-butanoyl-(R)-carnitine + CoA. The enzyme catalyses hexanoyl-CoA + (R)-carnitine = O-hexanoyl-(R)-carnitine + CoA. It carries out the reaction octanoyl-CoA + (R)-carnitine = O-octanoyl-(R)-carnitine + CoA. The catalysed reaction is decanoyl-CoA + (R)-carnitine = O-decanoyl-(R)-carnitine + CoA. It catalyses the reaction 3-methylbutanoyl-CoA + (R)-carnitine = O-3-methylbutanoyl-(R)-carnitine + CoA. The enzyme catalyses 2-methylpropanoyl-CoA + (R)-carnitine = O-isobutanoyl-(R)-carnitine + CoA. It carries out the reaction 2-methylbutanoyl-CoA + (R)-carnitine = O-2-methylbutanoyl-(R)-carnitine + CoA. The catalysed reaction is acetoacetyl-CoA + (R)-carnitine = O-3-oxobutanoyl-(R)-carnitine + CoA. It catalyses the reaction 3-hydroxybutanoyl-CoA + (R)-carnitine = O-3-hydroxybutanoyl-(R)-carnitine + CoA. The enzyme catalyses 4,8-dimethylnonanoyl-CoA + (R)-carnitine = O-4,8-dimethylnonanoyl-(R)-carnitine + CoA. It carries out the reaction 2,6-dimethylheptanoyl-CoA + (R)-carnitine = O-2,6-dimethylheptanoyl-(R)-carnitine + CoA. Catalyzes the reversible transfer of acyl groups from carnitine to coenzyme A (CoA) and regulates the acyl-CoA/CoA ratio. Also plays a crucial role in the transport of fatty acids for beta-oxidation. Responsible for the synthesis of short- and branched-chain acylcarnitines. Active towards some branched-chain amino acid oxidation pathway (BCAAO) intermediates. Trans-2-enoyl-CoAs and 2-methylacyl-CoAs are poor substrates. The sequence is that of Carnitine O-acetyltransferase from Rattus norvegicus (Rat).